The sequence spans 644 residues: Exoribonuclease 2 (644 aa).

In terms of domain architecture, RNB spans 189 to 516 (REDLTALNFV…NHRLLKAIIT (328 aa)). The region spanning 561-643 (DTRFTAEIID…ETRNVIARPV (83 aa)) is the S1 motif domain.

It belongs to the RNR ribonuclease family. RNase II subfamily.

The protein localises to the cytoplasm. The catalysed reaction is Exonucleolytic cleavage in the 3'- to 5'-direction to yield nucleoside 5'-phosphates.. Its function is as follows. Involved in mRNA degradation. Hydrolyzes single-stranded polyribonucleotides processively in the 3' to 5' direction. This chain is Exoribonuclease 2, found in Yersinia pseudotuberculosis serotype O:3 (strain YPIII).